The chain runs to 412 residues: Major facilitator superfamily domain-containing protein 3 (412 aa).

Helical transmembrane passes span 10-30 (GLYL…PVLL), 40-60 (VGLA…APLV), 73-93 (STAG…PGAG), 94-114 (QAGL…GAAM), 138-158 (VQVV…LALL), 166-186 (LFLL…AAPA), 209-229 (VLAV…KLGE), 250-270 (LGLW…SLGG), 291-311 (LGGL…GASM), 321-341 (ALLS…VTFT), 361-381 (LLAT…GGLA), and 384-404 (LGPH…VLYL).

It belongs to the major facilitator superfamily.

It is found in the membrane. This is Major facilitator superfamily domain-containing protein 3 (MFSD3) from Homo sapiens (Human).